The sequence spans 268 residues: Small ribosomal subunit protein uS3 (268 aa).

Positions 40–110 constitute a KH type-2 domain; that stretch reads IRNLFFINYR…KLDLTINEIG (71 aa).

The protein belongs to the universal ribosomal protein uS3 family. In terms of assembly, part of the 30S ribosomal subunit. Forms a tight complex with proteins S10 and S14.

In terms of biological role, binds the lower part of the 30S subunit head. Binds mRNA in the 70S ribosome, positioning it for translation. This is Small ribosomal subunit protein uS3 from Mycoplasma genitalium (strain ATCC 33530 / DSM 19775 / NCTC 10195 / G37) (Mycoplasmoides genitalium).